Here is a 397-residue protein sequence, read N- to C-terminus: Kappa-carrageenase (397 aa).

Positions 1-25 (MKPISIVAFPIPAISMLLLSAVSQA) are cleaved as a signal peptide. A GH16 domain is found at 26 to 299 (ASMQPPIAKP…YVRTWVKVGN (274 aa)). A disulfide bond links cysteine 98 and cysteine 268. The Nucleophile role is filled by glutamate 163. Aspartate 165 is an active-site residue. Glutamate 168 (proton donor) is an active-site residue. A BIG2 domain is found at 316-387 (AVNSVQLSAA…TITVKTKNKG (72 aa)).

It belongs to the glycosyl hydrolase 16 family.

The protein resides in the periplasm. The catalysed reaction is Endohydrolysis of (1-&gt;4)-beta-D-linkages between D-galactose 4-sulfate and 3,6-anhydro-D-galactose in kappa-carrageenans.. The polypeptide is Kappa-carrageenase (cgkA) (Pseudoalteromonas carrageenovora (Alteromonas carrageenovora)).